The primary structure comprises 194 residues: Naphthalene 1,2-dioxygenase system, small oxygenase component (194 aa).

Belongs to the bacterial ring-hydroxylating dioxygenase beta subunit family. As to quaternary structure, the naphthalene dioxygenase (NDO) multicomponent enzyme system is composed of an electron transfer component and a dioxygenase component (iron sulfur protein (ISP)). The electron transfer component is composed of a ferredoxin reductase (NdoR) and a ferredoxin (NdoA), and the dioxygenase component is formed of a heterohexamer (trimer of heterodimers) of three large alpha subunits (NdoB) and three small beta subunits (NdoC).

It participates in aromatic compound metabolism; naphthalene degradation. Component of the naphthalene dioxygenase (NDO) multicomponent enzyme system which catalyzes the incorporation of both atoms of molecular oxygen into naphthalene to form cis-(1R,2S)-dihydroxy-1,2-dihydronaphthalene. The beta subunit seems to have a structural role in the holoenzyme. Also able to catalyze the cis-dihydroxylation of biphenyl and phenanthrene. The polypeptide is Naphthalene 1,2-dioxygenase system, small oxygenase component (Pseudomonas putida (Arthrobacter siderocapsulatus)).